Here is a 370-residue protein sequence, read N- to C-terminus: Aminomethyltransferase (370 aa).

This sequence belongs to the GcvT family. As to quaternary structure, the glycine cleavage system is composed of four proteins: P, T, L and H.

The enzyme catalyses N(6)-[(R)-S(8)-aminomethyldihydrolipoyl]-L-lysyl-[protein] + (6S)-5,6,7,8-tetrahydrofolate = N(6)-[(R)-dihydrolipoyl]-L-lysyl-[protein] + (6R)-5,10-methylene-5,6,7,8-tetrahydrofolate + NH4(+). In terms of biological role, the glycine cleavage system catalyzes the degradation of glycine. This chain is Aminomethyltransferase, found in Clostridium botulinum (strain ATCC 19397 / Type A).